A 361-amino-acid chain; its full sequence is Phosphoserine aminotransferase (361 aa).

L-glutamate is bound at residue Arg42. Pyridoxal 5'-phosphate contacts are provided by residues 76-77 (AR), Trp102, Thr153, Asp173, and Gln196. Position 197 is an N6-(pyridoxal phosphate)lysine (Lys197). A pyridoxal 5'-phosphate-binding site is contributed by 238–239 (NT).

Belongs to the class-V pyridoxal-phosphate-dependent aminotransferase family. SerC subfamily. In terms of assembly, homodimer. Requires pyridoxal 5'-phosphate as cofactor.

Its subcellular location is the cytoplasm. The enzyme catalyses O-phospho-L-serine + 2-oxoglutarate = 3-phosphooxypyruvate + L-glutamate. It carries out the reaction 4-(phosphooxy)-L-threonine + 2-oxoglutarate = (R)-3-hydroxy-2-oxo-4-phosphooxybutanoate + L-glutamate. Its pathway is amino-acid biosynthesis; L-serine biosynthesis; L-serine from 3-phospho-D-glycerate: step 2/3. It participates in cofactor biosynthesis; pyridoxine 5'-phosphate biosynthesis; pyridoxine 5'-phosphate from D-erythrose 4-phosphate: step 3/5. Its function is as follows. Catalyzes the reversible conversion of 3-phosphohydroxypyruvate to phosphoserine and of 3-hydroxy-2-oxo-4-phosphonooxybutanoate to phosphohydroxythreonine. The chain is Phosphoserine aminotransferase from Pectobacterium carotovorum subsp. carotovorum (strain PC1).